The following is a 388-amino-acid chain: Cell adhesion molecule 4 (388 aa).

Positions 1 to 20 are cleaved as a signal peptide; sequence MGRARRFQWPLLLLWAAAAG. The 99-residue stretch at 21–119 folds into the Ig-like V-type domain; that stretch reads PGTAQEVQTE…DTHHQIATLT (99 aa). Over 25–324 the chain is Extracellular; sequence QEVQTENVTV…VEAQTSVPYA (300 aa). Asparagine 31 and asparagine 67 each carry an N-linked (GlcNAc...) asparagine glycan. 3 cysteine pairs are disulfide-bonded: cysteine 44/cysteine 104, cysteine 145/cysteine 199, and cysteine 245/cysteine 291. 2 consecutive Ig-like C2-type domains span residues 124 to 219 and 224 to 307; these read PENP…YVLD and PTAR…YVLV. N-linked (GlcNAc...) asparagine glycosylation occurs at asparagine 286. Residues 325–345 traverse the membrane as a helical segment; it reads IVGGILALLVFLIICVLVGMV. Topologically, residues 346–388 are cytoplasmic; the sequence is WCSVRQKGSYLTHEASGLDEQGEAREAFLNGSDGHKRKEEFFI. Serine 361 carries the post-translational modification Phosphoserine.

This sequence belongs to the nectin family. In terms of assembly, monomer and homodimer. N-glycosylated.

The protein localises to the membrane. Functionally, involved in the cell-cell adhesion. Has calcium- and magnesium-independent cell-cell adhesion activity. May have tumor-suppressor activity. The sequence is that of Cell adhesion molecule 4 (Cadm4) from Rattus norvegicus (Rat).